Here is a 286-residue protein sequence, read N- to C-terminus: ATP synthase gamma chain (286 aa).

It belongs to the ATPase gamma chain family. As to quaternary structure, F-type ATPases have 2 components, CF(1) - the catalytic core - and CF(0) - the membrane proton channel. CF(1) has five subunits: alpha(3), beta(3), gamma(1), delta(1), epsilon(1). CF(0) has three main subunits: a, b and c.

The protein resides in the cell membrane. Functionally, produces ATP from ADP in the presence of a proton gradient across the membrane. The gamma chain is believed to be important in regulating ATPase activity and the flow of protons through the CF(0) complex. The polypeptide is ATP synthase gamma chain (Ureaplasma urealyticum serovar 10 (strain ATCC 33699 / Western)).